We begin with the raw amino-acid sequence, 95 residues long: Pyrimidine/purine nucleoside phosphorylase (95 aa).

Belongs to the nucleoside phosphorylase PpnP family.

The catalysed reaction is a purine D-ribonucleoside + phosphate = a purine nucleobase + alpha-D-ribose 1-phosphate. It carries out the reaction adenosine + phosphate = alpha-D-ribose 1-phosphate + adenine. The enzyme catalyses cytidine + phosphate = cytosine + alpha-D-ribose 1-phosphate. It catalyses the reaction guanosine + phosphate = alpha-D-ribose 1-phosphate + guanine. The catalysed reaction is inosine + phosphate = alpha-D-ribose 1-phosphate + hypoxanthine. It carries out the reaction thymidine + phosphate = 2-deoxy-alpha-D-ribose 1-phosphate + thymine. The enzyme catalyses uridine + phosphate = alpha-D-ribose 1-phosphate + uracil. It catalyses the reaction xanthosine + phosphate = alpha-D-ribose 1-phosphate + xanthine. Catalyzes the phosphorolysis of diverse nucleosides, yielding D-ribose 1-phosphate and the respective free bases. Can use uridine, adenosine, guanosine, cytidine, thymidine, inosine and xanthosine as substrates. Also catalyzes the reverse reactions. This chain is Pyrimidine/purine nucleoside phosphorylase, found in Yersinia enterocolitica serotype O:8 / biotype 1B (strain NCTC 13174 / 8081).